Consider the following 288-residue polypeptide: ATP synthase gamma chain (288 aa).

The protein belongs to the ATPase gamma chain family. F-type ATPases have 2 components, CF(1) - the catalytic core - and CF(0) - the membrane proton channel. CF(1) has five subunits: alpha(3), beta(3), gamma(1), delta(1), epsilon(1). CF(0) has three main subunits: a, b and c.

It localises to the cell inner membrane. Produces ATP from ADP in the presence of a proton gradient across the membrane. The gamma chain is believed to be important in regulating ATPase activity and the flow of protons through the CF(0) complex. The chain is ATP synthase gamma chain from Blochmanniella pennsylvanica (strain BPEN).